Here is a 417-residue protein sequence, read N- to C-terminus: Serine hydroxymethyltransferase (417 aa).

(6S)-5,6,7,8-tetrahydrofolate is bound by residues Leu-121 and 125–127; that span reads GHL. Lys-230 is subject to N6-(pyridoxal phosphate)lysine. Glu-245 serves as a coordination point for (6S)-5,6,7,8-tetrahydrofolate.

Belongs to the SHMT family. As to quaternary structure, homodimer. Requires pyridoxal 5'-phosphate as cofactor.

Its subcellular location is the cytoplasm. It catalyses the reaction (6R)-5,10-methylene-5,6,7,8-tetrahydrofolate + glycine + H2O = (6S)-5,6,7,8-tetrahydrofolate + L-serine. It participates in one-carbon metabolism; tetrahydrofolate interconversion. The protein operates within amino-acid biosynthesis; glycine biosynthesis; glycine from L-serine: step 1/1. Catalyzes the reversible interconversion of serine and glycine with tetrahydrofolate (THF) serving as the one-carbon carrier. This reaction serves as the major source of one-carbon groups required for the biosynthesis of purines, thymidylate, methionine, and other important biomolecules. Also exhibits THF-independent aldolase activity toward beta-hydroxyamino acids, producing glycine and aldehydes, via a retro-aldol mechanism. The chain is Serine hydroxymethyltransferase from Desulfitobacterium hafniense (strain DSM 10664 / DCB-2).